Here is a 277-residue protein sequence, read N- to C-terminus: NH(3)-dependent NAD(+) synthetase (277 aa).

47-54 (GISGGQDS) contacts ATP. Residue aspartate 53 participates in Mg(2+) binding. Arginine 141 is a binding site for deamido-NAD(+). Residue threonine 161 participates in ATP binding. Glutamate 166 is a binding site for Mg(2+). 2 residues coordinate deamido-NAD(+): lysine 174 and aspartate 181. ATP-binding residues include lysine 190 and threonine 212. 261–262 (HK) lines the deamido-NAD(+) pocket.

The protein belongs to the NAD synthetase family. Homodimer.

It carries out the reaction deamido-NAD(+) + NH4(+) + ATP = AMP + diphosphate + NAD(+) + H(+). It functions in the pathway cofactor biosynthesis; NAD(+) biosynthesis; NAD(+) from deamido-NAD(+) (ammonia route): step 1/1. Functionally, catalyzes the ATP-dependent amidation of deamido-NAD to form NAD. Uses ammonia as a nitrogen source. The sequence is that of NH(3)-dependent NAD(+) synthetase from Lactobacillus johnsonii (strain CNCM I-12250 / La1 / NCC 533).